The primary structure comprises 326 residues: Protein FAM50 homolog (326 aa).

The segment at 77-111 (ISNRDLQVARGDQSSSTQSKDSQEAREKEEHVAKH) is disordered. The span at 97–109 (DSQEAREKEEHVA) shows a compositional bias: basic and acidic residues.

It belongs to the FAM50 family.

The protein is Protein FAM50 homolog of Caenorhabditis elegans.